We begin with the raw amino-acid sequence, 352 residues long: C-C chemokine receptor type 5 (352 aa).

Topologically, residues 1–30 are extracellular; that stretch reads MDYSMSTALYDIDYGMSEPCQKIDVKQVAA. Sulfotyrosine is present on Tyr-3. Ser-6 carries an O-linked (GalNAc...) serine glycan. Sulfotyrosine is present on residues Tyr-10 and Tyr-14. An O-linked (GalNAc...) serine glycan is attached at Ser-17. Intrachain disulfides connect Cys-20–Cys-269 and Cys-101–Cys-178. Residues 31-58 form a helical membrane-spanning segment; that stretch reads RLLPPLYSLVFIFGFVGNLLVVLILITC. The Cytoplasmic portion of the chain corresponds to 59–68; that stretch reads KKLKSMTDIY. Residues 69–89 traverse the membrane as a helical segment; it reads LLNLAISDLLFLLTLPLWAHY. The Extracellular segment spans residues 90-102; it reads AAAEWDFGGAMCK. A helical transmembrane segment spans residues 103-124; the sequence is VFTGMYHMGYFGGIFFIILLTI. The Cytoplasmic segment spans residues 125 to 141; sequence DRYLAIVHAVFALKART. A helical transmembrane segment spans residues 142-166; that stretch reads VTFGVVTSGVTWVAAILVSLPDIIF. The Extracellular segment spans residues 167–198; it reads TRSQKEGFRCSCSPHFPASQYQFWKNFHTIMR. A helical membrane pass occupies residues 199–218; the sequence is NILSLVLPLLVMIVCYSGIL. The Cytoplasmic segment spans residues 219 to 235; that stretch reads KTLLRCRNEKRRHRAVR. Residues 236–260 form a helical membrane-spanning segment; the sequence is LIFAIMVVYFLFWAPYNVVLLLNTF. Topologically, residues 261–277 are extracellular; the sequence is QEFFGLNNCSSSNRLDR. The helical transmembrane segment at 278–301 threads the bilayer; the sequence is AMQVTETLGMTHCCINPVVYAFVG. The Cytoplasmic portion of the chain corresponds to 302–352; sequence EKFRSYLSAFFRKHVAKRLCKHCPLLPRETPEPASSVYTRSTGEQEISVGL. 2 S-palmitoyl cysteine lipidation sites follow: Cys-321 and Cys-324. Residues 332–352 form a disordered region; that stretch reads PEPASSVYTRSTGEQEISVGL. Phosphoserine; by BARK1 is present on residues Ser-336, Ser-337, Ser-342, and Ser-349. The span at 337-346 shows a compositional bias: polar residues; it reads SVYTRSTGEQ.

The protein belongs to the G-protein coupled receptor 1 family. As to quaternary structure, interacts with PRAF2. Efficient ligand binding to CCL3/MIP-1alpha and CCL4/MIP-1beta requires sulfation, O-glycosylation and sialic acid modifications. Glycosylation on Ser-6 is required for efficient binding of CCL4. Interacts with GRK2. Interacts with ARRB1 and ARRB2. Interacts with CNIH4. Interacts with S100A4; this interaction stimulates T-lymphocyte chemotaxis. In terms of processing, sulfated on at least 2 of the N-terminal tyrosines. Sulfation is required for efficient binding of the chemokines, CCL3 and CCL4. Post-translationally, O-glycosylated, but not N-glycosylated. Ser-6 appears to be the major site. Also sialylated glycans present which contribute to chemokine binding. Ser-17 may also be glycosylated and, if so, with small moieties such as a T-antigen. Palmitoylation in the C-terminal is important for cell surface expression. In terms of processing, phosphorylation on serine residues in the C-terminal is stimulated by binding CC chemokines especially by APO-RANTES.

The protein resides in the cell membrane. In terms of biological role, receptor for a number of inflammatory CC-chemokines including CCL3/MIP-1-alpha, CCL4/MIP-1-beta and RANTES and subsequently transduces a signal by increasing the intracellular calcium ion level. May play a role in the control of granulocytic lineage proliferation or differentiation. Participates in T-lymphocyte migration to the infection site by acting as a chemotactic receptor. This chain is C-C chemokine receptor type 5 (CCR5), found in Oryctolagus cuniculus (Rabbit).